A 152-amino-acid polypeptide reads, in one-letter code: Interleukin-3 (152 aa).

The signal sequence occupies residues Met-1 to Gln-19. 2 N-linked (GlcNAc...) asparagine glycosylation sites follow: Asn-34 and Asn-89. Residues Cys-35 and Cys-103 are joined by a disulfide bond.

Belongs to the IL-3 family. In terms of assembly, interacts with IL3RA. In terms of tissue distribution, activated T-cells, mast cells, natural killer cells.

The protein resides in the secreted. Functionally, cytokine secreted predominantly by activated T-lymphocytes as well as mast cells and osteoblastic cells that controls the production and differentiation of hematopoietic progenitor cells into lineage-restricted cells. Also stimulates mature basophils, eosinophils, and monocytes to become functionally activated. In addition, plays an important role in neural cell proliferation and survival. Participates as well in bone homeostasis and inhibits osteoclast differentiation by preventing NF-kappa-B nuclear translocation and activation. Mechanistically, exerts its biological effects through a receptor composed of IL3RA subunit and a signal transducing subunit IL3RB. Receptor stimulation results in the rapid activation of JAK2 kinase activity leading to STAT5-mediated transcriptional program. Alternatively, contributes to cell survival under oxidative stress in non-hematopoietic systems by activating pathways mediated by PI3K/AKT and ERK. The sequence is that of Interleukin-3 from Homo sapiens (Human).